Consider the following 431-residue polypeptide: Enolase (431 aa).

(2R)-2-phosphoglycerate is bound at residue Q168. E210 acts as the Proton donor in catalysis. 3 residues coordinate Mg(2+): D247, E291, and D318. Positions 343, 372, 373, and 394 each coordinate (2R)-2-phosphoglycerate. Catalysis depends on K343, which acts as the Proton acceptor.

The protein belongs to the enolase family. Component of the RNA degradosome, a multiprotein complex involved in RNA processing and mRNA degradation. Mg(2+) is required as a cofactor.

It is found in the cytoplasm. The protein resides in the secreted. The protein localises to the cell surface. It catalyses the reaction (2R)-2-phosphoglycerate = phosphoenolpyruvate + H2O. It functions in the pathway carbohydrate degradation; glycolysis; pyruvate from D-glyceraldehyde 3-phosphate: step 4/5. Its function is as follows. Catalyzes the reversible conversion of 2-phosphoglycerate (2-PG) into phosphoenolpyruvate (PEP). It is essential for the degradation of carbohydrates via glycolysis. This is Enolase from Acinetobacter baumannii (strain SDF).